Here is a 466-residue protein sequence, read N- to C-terminus: MPRTIIEKLWDSHVVHERPGAPTLLFIDLHLVHEVTSPQAFQGLRERGLKVRRPDLTIATADHSIPTTDRSLPIVDEIAAKQLAQLETNCKDFGIRCLGVHSSQQGIVHVIGPELGLTQPGMTVVCGDSHTATHGAFGALAFGIGTSEVEQVLASQCLLQRKSKTFQVKVDGALKAGVSAKDIILALIARIGIGGGTGSVFEYTGSAIRALSVEERMTVCNMSIEGGARAGLIAPDDATFEYLAGRPHAPKGAAWDAAIPRWKQLPTDDGATYDRSVSIDADTLEPMITYGTNPGMGVSINAALPDPSQVSDPMARDSITKALAYMGLEGGKPLVGHPIDVVFIGSCTNSRISDLRTAAGLLKGRKVSPKVRVMVVPGSQEVKRQAIAEGLPEIFRAAGCDYREPGCSMCIAMNGDQLAPGEYSVSTSNRNFEGRQGKGGRTFLASPLTAAASAITGVVTDVRTLL.

[4Fe-4S] cluster is bound by residues cysteine 347, cysteine 407, and cysteine 410.

The protein belongs to the aconitase/IPM isomerase family. LeuC type 1 subfamily. In terms of assembly, heterodimer of LeuC and LeuD. It depends on [4Fe-4S] cluster as a cofactor.

The catalysed reaction is (2R,3S)-3-isopropylmalate = (2S)-2-isopropylmalate. The protein operates within amino-acid biosynthesis; L-leucine biosynthesis; L-leucine from 3-methyl-2-oxobutanoate: step 2/4. Catalyzes the isomerization between 2-isopropylmalate and 3-isopropylmalate, via the formation of 2-isopropylmaleate. This Solibacter usitatus (strain Ellin6076) protein is 3-isopropylmalate dehydratase large subunit.